Consider the following 287-residue polypeptide: Bifunctional protein FolD 2 (287 aa).

NADP(+) contacts are provided by residues 166-168 and I232; that span reads GAS.

It belongs to the tetrahydrofolate dehydrogenase/cyclohydrolase family. As to quaternary structure, homodimer.

The catalysed reaction is (6R)-5,10-methylene-5,6,7,8-tetrahydrofolate + NADP(+) = (6R)-5,10-methenyltetrahydrofolate + NADPH. The enzyme catalyses (6R)-5,10-methenyltetrahydrofolate + H2O = (6R)-10-formyltetrahydrofolate + H(+). The protein operates within one-carbon metabolism; tetrahydrofolate interconversion. Its function is as follows. Catalyzes the oxidation of 5,10-methylenetetrahydrofolate to 5,10-methenyltetrahydrofolate and then the hydrolysis of 5,10-methenyltetrahydrofolate to 10-formyltetrahydrofolate. This is Bifunctional protein FolD 2 from Hydrogenovibrio crunogenus (strain DSM 25203 / XCL-2) (Thiomicrospira crunogena).